Here is a 97-residue protein sequence, read N- to C-terminus: Na(+)/H(+) antiporter subunit F1 (97 aa).

3 helical membrane passes run 3 to 23 (FKIFIITALIIVVLSMLAMLI), 35 to 55 (VVALDAIGLQLMAVIALFSIL), and 60 to 80 (YMLVVILMVGILAFLGTAVFS).

The protein belongs to the CPA3 antiporters (TC 2.A.63) subunit F family. May form a heterooligomeric complex that consists of seven subunits: mnhA1, mnhB1, mnhC1, mnhD1, mnhE1, mnhF1 and mnhG1.

The protein localises to the cell membrane. Its function is as follows. Mnh complex is a Na(+)/H(+) antiporter involved in Na(+) excretion. In Staphylococcus epidermidis (strain ATCC 35984 / DSM 28319 / BCRC 17069 / CCUG 31568 / BM 3577 / RP62A), this protein is Na(+)/H(+) antiporter subunit F1 (mnhF1).